Here is a 535-residue protein sequence, read N- to C-terminus: Unconventional prefoldin RPB5 interactor 1 (535 aa).

Met-1 bears the N-acetylmethionine mark. 4 disordered regions span residues 1–23 (MEAP…PALV), 223–330 (LLGE…VGDN), 352–383 (KNTT…QELP), and 412–431 (SRSR…AAEF). Residues 7–18 (ETPPDPSPPSAP) are compositionally biased toward pro residues. Composition is skewed to polar residues over residues 253 to 265 (TNVN…TDSH) and 276 to 296 (EPFS…SSSY). Positions 299–320 (DDDDDDDDDDDDDNIDDDDGDN) are enriched in acidic residues. Ser-372 bears the Phosphoserine; by RPS6KB1 mark. Thr-373 carries the post-translational modification Phosphothreonine. Residues 417–427 (NSVCSDTSESS) show a composition bias toward polar residues. Residue Ser-442 is modified to Phosphoserine.

This sequence belongs to the RNA polymerase II subunit 5-mediating protein family. In terms of assembly, homodimer. Component of the PAQosome complex which is responsible for the biogenesis of several protein complexes and which consists of R2TP complex members RUVBL1, RUVBL2, RPAP3 and PIH1D1, URI complex members PFDN2, PFDN6, PDRG1, UXT and URI1 as well as ASDURF, POLR2E and DNAAF10/WDR92. Interacts with POLR2E/RPB5, RUVBL2 and RUVBL1. Interacts with PFDN2, PFDN4 and STAP1; the interactions are phosphorylation-dependent and occur in a growth-dependent manner in the mitochondrion. Interacts with UXT. Interacts with PPP1CC; the interaction is phosphorylation-dependent and occurs in a growth factor-dependent manner. Interacts (via the middle C-terminal region) with GTF2F1 and GTF2F2. Interacts with DMAP1. Interacts with TSC1 and TSC2. Interacts with PRPF8 and EFTUD2 in a ZNHIT2-dependent manner. Post-translationally, phosphorylated. Phosphorylation occurs essentially on serine residues. Phosphorylation occurs in response to androgen treatment in prostate cancer cells in a mTOR-dependent manner. Phosphorylated; hyperhosphorylated in mitochondria in a mTORC-dependent signaling pathway. Phosphorylated at Ser-372 by RPS6KB1 in a growth factor- and rapamycin-dependent manner. S6K1-mediated mitochondrial phosphorylation at Ser-372 disrupts the URI1-PPP1CC complex in the mitochondrion, relieves PPP1CC phosphatase inhibition activity and hence engages a negative feedback diminishing RPS6KB1 kinase activity, preventing sustained S6K1-dependent signaling. Ubiquitous. Expressed in ovarian cancers (at protein level). Expressed strongly in skeletal muscle. Expressed weakly in brain, heart, pancreas and in prostate epithelial cells.

It is found in the nucleus. The protein localises to the cytoplasm. The protein resides in the mitochondrion. It localises to the cell projection. Its subcellular location is the dendrite. Functionally, involved in gene transcription regulation. Acts as a transcriptional repressor in concert with the corepressor UXT to regulate androgen receptor (AR) transcription. May act as a tumor suppressor to repress AR-mediated gene transcription and to inhibit anchorage-independent growth in prostate cancer cells. Required for cell survival in ovarian cancer cells. Together with UXT, associates with chromatin to the NKX3-1 promoter region. Antagonizes transcriptional modulation via hepatitis B virus X protein. Plays a central role in maintaining S6K1 signaling and BAD phosphorylation under normal growth conditions thereby protecting cells from potential deleterious effects of sustained S6K1 signaling. The URI1-PPP1CC complex acts as a central component of a negative feedback mechanism that counteracts excessive S6K1 survival signaling to BAD in response to growth factors. Mediates inhibition of PPP1CC phosphatase activity in mitochondria. Coordinates the regulation of nutrient-sensitive gene expression availability in a mTOR-dependent manner. Seems to be a scaffolding protein able to assemble a prefoldin-like complex that contains PFDs and proteins with roles in transcription and ubiquitination. This Homo sapiens (Human) protein is Unconventional prefoldin RPB5 interactor 1 (URI1).